Consider the following 235-residue polypeptide: Eukaryotic translation initiation factor 4E-1 (235 aa).

Residues 16–25 (VNKHRGVRSD) are compositionally biased toward basic and acidic residues. A disordered region spans residues 16 to 56 (VNKHRGVRSDGEEDEQLEEGEIVGGDADTLSSSSSSRPGTA). The segment covering 26-36 (GEEDEQLEEGE) has biased composition (acidic residues). EIF4G-binding stretches follow at residues 60–63 (HPLE) and 70–106 (FDTP…NNIH). Residues 78-83 (KQVAWG), Lys110, and 128-129 (WE) contribute to the mRNA site. Residues Cys133 and Cys171 are joined by a disulfide bond. Positions 154–163 (YTLLAMIGEQ) are EIF4G-binding. Residues 178 to 183 (RARQEK) and 223 to 227 (KTLDR) contribute to the mRNA site.

The protein belongs to the eukaryotic initiation factor 4E family. In terms of assembly, EIF4F is a multi-subunit complex, the composition of which varies with external and internal environmental conditions. It is composed of at least EIF4A, EIF4E and EIF4G. EIF4E is also known to interact with other partners. In higher plants two isoforms of EIF4F have been identified, named isoform EIF4F and isoform EIF(iso)4F. Isoform EIF4F has subunits p220 and p26, whereas isoform EIF(iso)4F has subunits p82 and p28. (Microbial infection) Interacts with potyvirus viral genome-linked protein (VPg); this interaction is possible in susceptible hosts but impaired in resistant plants. According to the redox status, the Cys-133-Cys-171 disulfide bridge may have a role in regulating protein function by affecting its ability to bind capped mRNA.

It is found in the nucleus. Its subcellular location is the cytoplasm. Component of the protein complex eIF4F, which is involved in the recognition of the mRNA cap, ATP-dependent unwinding of 5'-terminal secondary structure and recruitment of mRNA to the ribosome. Recognizes and binds the 7-methylguanosine-containing mRNA cap during an early step in the initiation of protein synthesis and facilitates ribosome binding by inducing the unwinding of the mRNAs secondary structures. Key component of recessive resistance to potyviruses. Its function is as follows. (Microbial infection) Susceptibility host factor required for viral infection by recruiting viral RNAs to the host ribosomal complex via an interaction with viral genome-linked protein (VPg). This is Eukaryotic translation initiation factor 4E-1 from Lactuca sativa (Garden lettuce).